A 120-amino-acid polypeptide reads, in one-letter code: BolA-like protein 2 (120 aa).

It belongs to the BolA/IbaG family. In terms of assembly, interacts with FRA1, GRX3 and GRX4.

It localises to the cytoplasm. The protein resides in the nucleus. Functionally, involved in the regulation of the iron regulon in response to decreased mitochondrial iron-sulfur cluster synthesis. May be involved in mitochondrial organization and biogenesis. This Saccharomyces cerevisiae (strain ATCC 204508 / S288c) (Baker's yeast) protein is BolA-like protein 2 (BOL2).